Here is a 273-residue protein sequence, read N- to C-terminus: Type II restriction enzyme HgiCII (273 aa).

It belongs to the TdeIII type II restriction endonuclease family.

The catalysed reaction is Endonucleolytic cleavage of DNA to give specific double-stranded fragments with terminal 5'-phosphates.. Functionally, a P subtype restriction enzyme that recognizes the double-stranded sequence 5'-GGWCC-3' and cleaves after G-1. The protein is Type II restriction enzyme HgiCII of Herpetosiphon aurantiacus (Herpetosiphon giganteus).